The primary structure comprises 350 residues: DNA repair protein RAD51 homolog 2 (350 aa).

An interaction with RAD51C region spans residues 1–75 (MSSKKLRRVG…TAYELKTRRS (75 aa)). Position 108–115 (108–115 (GPPGCGKT)) interacts with ATP.

This sequence belongs to the RecA family. RAD51 subfamily. Part of the BCDX2 complex consisting of RAD51B, RAD51C, RAD51D and XRCC2; the complex has a ring-like structure arranged into a flat disc around a central channel. The BCDX2 subcomplex RAD51B:RAD51C interacts with RAD51. Interacts with SWSAP1; involved in homologous recombination repair. Interacts with HELQ. Post-translationally, phosphorylated on tyrosine residues by BCR-ABL. In terms of tissue distribution, expressed in a wide range of tissues.

It localises to the nucleus. Its function is as follows. Involved in the homologous recombination repair (HRR) pathway of double-stranded DNA breaks arising during DNA replication or induced by DNA-damaging agents. May promote the assembly of presynaptic RAD51 nucleoprotein filaments. Binds single-stranded DNA and double-stranded DNA and has DNA-dependent ATPase activity. Part of the RAD51 paralog protein complex BCDX2 which acts in the BRCA1-BRCA2-dependent HR pathway. Upon DNA damage, BCDX2 acts downstream of BRCA2 recruitment and upstream of RAD51 recruitment. BCDX2 binds predominantly to the intersection of the four duplex arms of the Holliday junction and to junction of replication forks. The BCDX2 complex was originally reported to bind single-stranded DNA, single-stranded gaps in duplex DNA and specifically to nicks in duplex DNA. The BCDX2 subcomplex RAD51B:RAD51C exhibits single-stranded DNA-dependent ATPase activity suggesting an involvement in early stages of the HR pathway. The sequence is that of DNA repair protein RAD51 homolog 2 (Rad51b) from Mus musculus (Mouse).